The sequence spans 321 residues: Queuosine 5'-phosphate N-glycosylase/hydrolase (321 aa).

Queuine-binding residues include Phe-227, Asp-229, and Asp-296. The Nucleophile or transition state stabilizer role is filled by Asp-229.

Belongs to the QNG1 protein family.

The enzyme catalyses queuosine 5'-phosphate + H2O = queuine + D-ribose 5-phosphate. Functionally, catalyzes the hydrolysis of queuosine 5'-phosphate, releasing the nucleobase queuine (q). Is required for salvage of queuine from exogenous queuosine (Q) that is imported and then converted to queuosine 5'-phosphate intracellularly. This is Queuosine 5'-phosphate N-glycosylase/hydrolase from Dictyostelium discoideum (Social amoeba).